A 233-amino-acid chain; its full sequence is Ribonuclease 3 (233 aa).

The RNase III domain maps to 8–135 (AQRFLEDKQL…VIGAIYLDQG (128 aa)). Residue Glu-48 participates in Mg(2+) binding. Asp-52 is a catalytic residue. Asp-121 and Glu-124 together coordinate Mg(2+). Glu-124 is an active-site residue. In terms of domain architecture, DRBM spans 161–230 (DYKSKLQELV…AQKVLQDNLV (70 aa)).

This sequence belongs to the ribonuclease III family. As to quaternary structure, homodimer. Mg(2+) serves as cofactor.

The protein localises to the cytoplasm. The enzyme catalyses Endonucleolytic cleavage to 5'-phosphomonoester.. Functionally, digests double-stranded RNA. Involved in the processing of primary rRNA transcript to yield the immediate precursors to the large and small rRNAs (23S and 16S). Processes some mRNAs, and tRNAs when they are encoded in the rRNA operon. Processes pre-crRNA and tracrRNA of type II CRISPR loci if present in the organism. The protein is Ribonuclease 3 of Syntrophomonas wolfei subsp. wolfei (strain DSM 2245B / Goettingen).